Here is a 214-residue protein sequence, read N- to C-terminus: Somatotropin-A (214 aa).

Residues 1-25 form the signal peptide; the sequence is MATGFCSSFGLLVVLLLKNVADVGA. Cystine bridges form between Cys-77–Cys-187 and Cys-204–Cys-212.

Belongs to the somatotropin/prolactin family.

Its subcellular location is the secreted. Its function is as follows. Growth hormone plays an important role in growth control. This Xenopus laevis (African clawed frog) protein is Somatotropin-A (gh-a).